A 985-amino-acid polypeptide reads, in one-letter code: Alpha-glucosidase (985 aa).

The signal sequence occupies residues 1 to 25 (MAGLKSFLASSWLLPVACGASQSIV). Asn126, Asn145, Asn220, Asn255, Asn349, and Asn424 each carry an N-linked (GlcNAc...) asparagine glycan. Asp492 (nucleophile) is an active-site residue. Residue Glu495 is part of the active site. N-linked (GlcNAc...) asparagine glycans are attached at residues Asn508, Asn536, Asn539, Asn602, and Asn624. The active-site Proton donor is Asp660. Asn661, Asn835, Asn881, Asn929, and Asn957 each carry an N-linked (GlcNAc...) asparagine glycan.

It belongs to the glycosyl hydrolase 31 family.

It catalyses the reaction Hydrolysis of terminal, non-reducing (1-&gt;4)-linked alpha-D-glucose residues with release of alpha-D-glucose.. In terms of biological role, hydrolyzes malto-oligosaccharides, but has a low activity toward soluble starch. The polypeptide is Alpha-glucosidase (agdA) (Aspergillus oryzae (strain ATCC 42149 / RIB 40) (Yellow koji mold)).